We begin with the raw amino-acid sequence, 326 residues long: Vomeronasal type-1 receptor 100 (326 aa).

The Extracellular segment spans residues 1–32; that stretch reads MSEFPFFSPQPLFSYMMNKNSRVHTDSNIRNT. Residues 33–53 form a helical membrane-spanning segment; sequence FFTEIGIGILANSFLLLFHIF. Residues 54–70 lie on the Cytoplasmic side of the membrane; sequence KFIRGQRSRLTDLPIGL. Residues 71–91 form a helical membrane-spanning segment; it reads LSLIHLLMLLMGAFIAIDIFI. Over 92 to 104 the chain is Extracellular; the sequence is SWRGWDDIICKFL. Cysteine 101 and cysteine 188 are oxidised to a cystine. Residues 105-127 form a helical membrane-spanning segment; it reads VYLYRSFRGLSLCTTCMLSVLQA. At 128 to 149 the chain is on the cytoplasmic side; that stretch reads ITLSPRSSCLAKFKHKSPHHVS. The chain crosses the membrane as a helical span at residues 150 to 170; sequence CAIISLSILYMFISSHLLVSI. The Extracellular portion of the chain corresponds to 171 to 209; sequence NATPNLTTNNFMQVTQSCYIIPLSYLMQSMFSTLLAIRD. N-linked (GlcNAc...) asparagine glycosylation occurs at asparagine 175. The helical transmembrane segment at 210-230 threads the bilayer; sequence ISLISLMVLSTCYMVVLLCRH. At 231 to 254 the chain is on the cytoplasmic side; sequence RNQIQHLQGTNLSPKASPEQRATQ. A helical membrane pass occupies residues 255–275; that stretch reads TILMLMTFFVLMSIFDSIVSC. At 276–285 the chain is on the extracellular side; sequence SRTMYLNDPT. Residues 286 to 306 traverse the membrane as a helical segment; that stretch reads SYYIQIFVVYIYATVSPFVFM. Residues 307–326 are Cytoplasmic-facing; the sequence is STEKHIVNFLKSMCVRVKNV.

The protein belongs to the G-protein coupled receptor 1 family. As to expression, expressed in 1-4% of neurons of the vomeronasal organ. Only one pheromone receptor gene may be expressed in a particular neuron. Not expressed in the main olfactory epithelium.

The protein localises to the cell membrane. In terms of biological role, putative pheromone receptor implicated in the regulation of social as well as reproductive behavior. This chain is Vomeronasal type-1 receptor 100 (Vom1r100), found in Rattus norvegicus (Rat).